We begin with the raw amino-acid sequence, 93 residues long: Small ribosomal subunit protein uS19c (93 aa).

It belongs to the universal ribosomal protein uS19 family.

The protein resides in the plastid. It localises to the chloroplast. Its function is as follows. Protein S19 forms a complex with S13 that binds strongly to the 16S ribosomal RNA. The chain is Small ribosomal subunit protein uS19c from Brachypodium distachyon (Purple false brome).